The following is a 678-amino-acid chain: Secretin ExeD (678 aa).

An N-terminal signal peptide occupies residues 1 to 25 (MINKGKGWRLATVAAALMMAGSAWA). An N0 region spans residues 26 to 122 (TEYSASFKNA…VVDETNPGIG (97 aa)). Residues 124 to 188 (EMVTRVVPVR…EVVRRVDKAG (65 aa)) form an N1 region. Positions 189-264 (DQEVDIIKLK…MVRQLDRDLQ (76 aa)) are N2. The N3 stretch occupies residues 267–348 (GNTRVFYLKY…ELEQVVAKLD (82 aa)). The segment at 353–602 (QVLVEAIIVE…VFIRPTILRD (250 aa)) is secretin. Positions 604 to 678 (NVYSGISSNK…GVQPFVQGNK (75 aa)) are s domain.

The protein belongs to the bacterial secretin family. GSP D subfamily. Forms a cylindrical channel with 15 subunits.

The protein localises to the cell outer membrane. Involved in a type II secretion system (T2SS, formerly general secretion pathway, GSP) for the export of proteins. This subunit forms the outer membrane channel. The sequence is that of Secretin ExeD (exeD) from Aeromonas hydrophila.